A 488-amino-acid polypeptide reads, in one-letter code: MARALMFQGTGSDVGKSLLVAGLARAFTLRGLKVRPFKPQNMSNNAAVTADGGEIGRAQALQARAARVPLSVHMNPVLLKPQGETGAQVVVQGRVHGTAKAAAYQGMKPSLLPFVLDSFDRLKAEADLVLVEGAGSASEVNLRTGDIANMGFARAADVPVVVIGDIDRGGVIASLVGTKAVIDAADAALIKGFVVNRFRGDPSLFATGMELIARQTGWAALGLVPHFSEAIRLPAEDALALSAPPAPKPRARTRICVPILPHVSNFDDLDPLDAEPSVEVRRIRPHETLPVDTDLVLLIGSKATIADLAALKAEGLHHDILAFARRGGHVMGLCGGYQMLGETIADPDGIEGEAKIARGLGLLKVHTVLSPEKRLVEVAGVALDPAVAAPFSGYEMHMGVTAGADAEQPFAVLSDGRQDGARSASGRVSGTYVHGLFASDAFRSGLLGALGGAPSQAAYEQGVEETLDRLAAHLAAHLDLDLLFSLAR.

The 191-residue stretch at 252–442 (RTRICVPILP…VHGLFASDAF (191 aa)) folds into the GATase cobBQ-type domain. The active-site Nucleophile is the Cys-334. Residue His-434 is part of the active site.

The protein belongs to the CobB/CobQ family. CobQ subfamily.

The protein operates within cofactor biosynthesis; adenosylcobalamin biosynthesis. In terms of biological role, catalyzes amidations at positions B, D, E, and G on adenosylcobyrinic A,C-diamide. NH(2) groups are provided by glutamine, and one molecule of ATP is hydrogenolyzed for each amidation. This chain is Cobyric acid synthase, found in Xanthobacter autotrophicus (strain ATCC BAA-1158 / Py2).